The sequence spans 251 residues: 5'-nucleotidase SurE (251 aa).

Residues aspartate 8, aspartate 9, serine 39, and asparagine 90 each contribute to the a divalent metal cation site.

The protein belongs to the SurE nucleotidase family. Requires a divalent metal cation as cofactor.

It is found in the cytoplasm. The enzyme catalyses a ribonucleoside 5'-phosphate + H2O = a ribonucleoside + phosphate. Functionally, nucleotidase that shows phosphatase activity on nucleoside 5'-monophosphates. The protein is 5'-nucleotidase SurE of Colwellia psychrerythraea (strain 34H / ATCC BAA-681) (Vibrio psychroerythus).